Here is a 124-residue protein sequence, read N- to C-terminus: Ribonuclease pancreatic (124 aa).

The span at 1-13 (SETAAEKFERQHM) shows a compositional bias: basic and acidic residues. The tract at residues 1–23 (SETAAEKFERQHMDSYSSSSSNS) is disordered. Residues K7 and R10 each contribute to the substrate site. Residue H12 is the Proton acceptor of the active site. 4 disulfide bridges follow: C26-C84, C40-C95, C58-C110, and C65-C72. Substrate is bound by residues 41–45 (KPVNT), K66, and R85. The active-site Proton donor is H119.

Belongs to the pancreatic ribonuclease family. In terms of assembly, monomer. Interacts with and forms tight 1:1 complexes with RNH1. Dimerization of two such complexes may occur. Interaction with RNH1 inhibits this protein. As to expression, pancreas.

Its subcellular location is the secreted. The catalysed reaction is an [RNA] containing cytidine + H2O = an [RNA]-3'-cytidine-3'-phosphate + a 5'-hydroxy-ribonucleotide-3'-[RNA].. It catalyses the reaction an [RNA] containing uridine + H2O = an [RNA]-3'-uridine-3'-phosphate + a 5'-hydroxy-ribonucleotide-3'-[RNA].. Its function is as follows. Endonuclease that catalyzes the cleavage of RNA on the 3' side of pyrimidine nucleotides. Acts on single-stranded and double-stranded RNA. This is Ribonuclease pancreatic (RNASE1) from Camelus bactrianus (Bactrian camel).